We begin with the raw amino-acid sequence, 259 residues long: Haloacid dehalogenase-like hydrolase domain-containing protein 2 (259 aa).

Aspartate 13 and serine 15 together coordinate Mg(2+). Substrate contacts are provided by residues 13–15 (DLS) and 46–47 (TN). Positions 47 to 71 (NTTKESKQDLLERLKKLEFDISEDE) form a coiled coil. Lysine 50 carries the post-translational modification N6-succinyllysine. Lysine 179 contributes to the substrate binding site. Aspartate 204 is a binding site for Mg(2+).

The protein belongs to the HAD-like hydrolase superfamily. Mg(2+) is required as a cofactor.

In Bos taurus (Bovine), this protein is Haloacid dehalogenase-like hydrolase domain-containing protein 2 (HDHD2).